Reading from the N-terminus, the 365-residue chain is Histidinol-phosphate aminotransferase (365 aa).

Lys-221 is modified (N6-(pyridoxal phosphate)lysine).

It belongs to the class-II pyridoxal-phosphate-dependent aminotransferase family. Histidinol-phosphate aminotransferase subfamily. In terms of assembly, homodimer. The cofactor is pyridoxal 5'-phosphate.

The catalysed reaction is L-histidinol phosphate + 2-oxoglutarate = 3-(imidazol-4-yl)-2-oxopropyl phosphate + L-glutamate. It functions in the pathway amino-acid biosynthesis; L-histidine biosynthesis; L-histidine from 5-phospho-alpha-D-ribose 1-diphosphate: step 7/9. This is Histidinol-phosphate aminotransferase from Rhodopseudomonas palustris (strain HaA2).